The following is a 522-amino-acid chain: Zinc finger protein 329 (522 aa).

Ser30 carries the post-translational modification Phosphoserine. 12 consecutive C2H2-type zinc fingers follow at residues 184–206 (YKCA…HRTH), 212–234 (YTCN…RRIH), 240–262 (YKCS…QRIH), 268–290 (YACL…QRTH), 296–318 (YRCN…LRIH), 324–346 (YECS…ERTH), 352–374 (FECV…QKIH), 380–402 (YECK…QRVH), 408–430 (YGCN…QRIH), 436–458 (YECN…QRIH), 464–486 (YQCL…QRLH), and 492–514 (SQCP…QRTH).

Belongs to the krueppel C2H2-type zinc-finger protein family.

The protein localises to the nucleus. Functionally, may be involved in transcriptional regulation. This Mus musculus (Mouse) protein is Zinc finger protein 329 (Znf329).